Here is a 435-residue protein sequence, read N- to C-terminus: GTPase Der (435 aa).

EngA-type G domains follow at residues 4 to 167 (PVVA…GDKA) and 175 to 350 (IRFS…ENQT). GTP-binding positions include 10-17 (GRPNVGKS), 57-61 (DTGGI), 119-122 (NKAD), 181-188 (GRPNVGKS), 228-232 (DTAGI), and 293-296 (NKWD). The KH-like domain maps to 351–435 (RRIQSSVLND…PIKILARKRK (85 aa)).

This sequence belongs to the TRAFAC class TrmE-Era-EngA-EngB-Septin-like GTPase superfamily. EngA (Der) GTPase family. Associates with the 50S ribosomal subunit.

In terms of biological role, GTPase that plays an essential role in the late steps of ribosome biogenesis. This Lactobacillus johnsonii (strain CNCM I-12250 / La1 / NCC 533) protein is GTPase Der.